Consider the following 225-residue polypeptide: Ribonuclease 3 (225 aa).

Residues 5–127 (MNKLTSKLGY…IIGAIYLDSD (123 aa)) enclose the RNase III domain. E40 lines the Mg(2+) pocket. D44 is a catalytic residue. Mg(2+) is bound by residues D113 and E116. The active site involves E116. One can recognise a DRBM domain in the interval 154–224 (DPKTRLQEFL…AETALEQLTN (71 aa)).

Belongs to the ribonuclease III family. Homodimer. The cofactor is Mg(2+).

It localises to the cytoplasm. It carries out the reaction Endonucleolytic cleavage to 5'-phosphomonoester.. Functionally, digests double-stranded RNA. Involved in the processing of primary rRNA transcript to yield the immediate precursors to the large and small rRNAs (23S and 16S). Processes some mRNAs, and tRNAs when they are encoded in the rRNA operon. Processes pre-crRNA and tracrRNA of type II CRISPR loci if present in the organism. The chain is Ribonuclease 3 from Vibrio cholerae serotype O1 (strain ATCC 39315 / El Tor Inaba N16961).